A 441-amino-acid chain; its full sequence is Transcriptional regulatory protein ZraR (441 aa).

In terms of domain architecture, Response regulatory spans 7 to 121 (DILVVDDDIS…NLQATLEKAL (115 aa)). A 4-aspartylphosphate modification is found at Asp-56. Positions 141–370 (MVGKSPAMQH…LENAVERAVV (230 aa)) constitute a Sigma-54 factor interaction domain. The ATP site is built by Gly-172, Thr-173, Arg-329, and Arg-359. A DNA-binding region (H-T-H motif) is located at residues 421–440 (KTEAARQLGITRKTLLAKLS).

Phosphorylated by ZraS.

It localises to the cytoplasm. Activity of the ZraS/ZraR two-component system is repressed by the zinc-bound form of ZraP, which probably interacts with the periplasmic region of ZraS. Functionally, part of the Zra signaling pathway, an envelope stress response (ESR) system composed of the periplasmic accessory protein ZraP, the histidine kinase ZraS and the transcriptional regulator ZraR. The ZraPSR system contributes to antibiotic resistance and is important for membrane integrity in the presence of membrane-targeting biocides. ZraR is a member of the two-component regulatory system ZraS/ZraR. When activated by ZraS, acts in conjunction with sigma-54 to regulate the expression of zraP in the presence of high Zn(2+) or Pb(2+) concentrations. Also positively autoregulates the expression of the zraSR operon. The polypeptide is Transcriptional regulatory protein ZraR (zraR) (Escherichia coli O157:H7).